Reading from the N-terminus, the 1047-residue chain is Suppression of tumorigenicity 18 protein (1047 aa).

3 disordered regions span residues 41–92, 168–221, and 251–286; these read TAED…HSTA, FLIH…VPKY, and DSET…SESL. Basic residues predominate over residues 52–65; sequence NKRKSLLMKPRHYS. Over residues 171–181 the composition is skewed to basic and acidic residues; the sequence is HSDDGRDKIDD. 2 consecutive CCHHC-type zinc fingers follow at residues 359–402 and 403–446; these read PRPE…PLEI and LAMH…KLAM. The Zn(2+) site is built by cysteine 368, cysteine 373, histidine 386, cysteine 392, cysteine 412, cysteine 417, histidine 430, and cysteine 436. 2 disordered regions span residues 523 to 563 and 672 to 710; these read GRKT…SYSY and YSKT…SPKP. The span at 550–563 shows a compositional bias: polar residues; that stretch reads AHTQSPGRASSYSY. Over residues 677–687 the composition is skewed to basic and acidic residues; that stretch reads GKTEEEKEKDP. CCHHC-type zinc fingers lie at residues 715–758, 759–802, 807–850, and 860–903; these read RDLK…LKSL, MAAN…GVKM, EEKE…QKEN, and KLNK…IKKG. Residues cysteine 724, cysteine 729, histidine 742, cysteine 748, cysteine 768, cysteine 773, histidine 786, cysteine 792, cysteine 816, cysteine 821, histidine 834, cysteine 840, cysteine 869, cysteine 874, histidine 887, and cysteine 893 each contribute to the Zn(2+) site. Positions 920-992 form a coiled coil; that stretch reads IESDEEIRHL…AGLSQALISS (73 aa).

This sequence belongs to the MYT1 family. As to expression, detected at low levels in heart, liver, kidney, skeletal muscle, pancreas, testis, ovary and prostate. Detected at even lower levels in mammary epithelial cells and breast cancer cells.

The protein localises to the nucleus. In terms of biological role, repressor that binds to DNA sequences containing a bipartite element consisting of a direct repeat of the sequence 5'-AAAGTTT-3' separated by 2-9 nucleotides. Represses basal transcription activity from target promoters. Inhibits colony formation in cultured breast cancer cells. This is Suppression of tumorigenicity 18 protein (ST18) from Homo sapiens (Human).